The following is a 955-amino-acid chain: Anoctamin-4 (955 aa).

The Extracellular segment spans residues 1-352; that stretch reads MEASSSGITN…FGEKIGLYFA (352 aa). Residues 72-100 are disordered; it reads CKDDDSLLHPGNLTSTSDDASRLEAGGET. N-linked (GlcNAc...) asparagine glycans are attached at residues asparagine 83, asparagine 105, asparagine 257, and asparagine 288. The helical transmembrane segment at 353-373 threads the bilayer; sequence WLGWYTGMLFPAAFIGLFVFL. Residues 374–424 lie on the Cytoplasmic side of the membrane; sequence YGVTTLDHSQVSKEVCQATDIIMCPVCDKYCPFMRLSDSCVYAKVTHLFDN. The chain crosses the membrane as a helical span at residues 425 to 445; sequence GATVFFAVFMAVWATVFLEFW. Residues 446 to 505 are Extracellular-facing; it reads KRRRAVIAYDWDLIDWEEEEEEIRPQFEAKYSKKERMNPISGKPEPYQAFTDKCSRLIVS. The helical transmembrane segment at 506 to 526 threads the bilayer; it reads ASGIFFMICVVIAAVFGIVIY. Residues 527–547 lie on the Cytoplasmic side of the membrane; sequence RVVTVSTFAAFKWALIRNNSQ. A helical transmembrane segment spans residues 548 to 568; the sequence is VATTGTAVCINFCIIMLLNVL. Residues 569 to 595 lie on the Extracellular side of the membrane; it reads YEKVALLLTNLEQPRTESEWENSFTLK. Residues 596–616 form a helical membrane-spanning segment; it reads MFLFQFVNLNSSTFYIAFFLG. Residues 617–715 are Cytoplasmic-facing; that stretch reads RFTGHPGAYL…AYGLFDEYLE (99 aa). Residues 716 to 736 form a helical membrane-spanning segment; sequence MILQFGFTTIFVAAFPLAPLL. Residues 737-768 lie on the Extracellular side of the membrane; the sequence is ALLNNIIEIRLDAYKFVTQWRRPLASRAKDIG. Residues 769–789 traverse the membrane as a helical segment; the sequence is IWYGILEGIGILSVITNAFVI. At 790-885 the chain is on the cytoplasmic side; sequence AITSDFIPRL…QFWHVLAARL (96 aa). Residues 886-906 form a helical membrane-spanning segment; it reads AFIIVFEHLVFCIKHLISYLI. Residues 907–955 are Extracellular-facing; the sequence is PDLPKDLRDRMRREKYLIQEMMYEAELERLQKERKERKKNGKAHHNEWP.

This sequence belongs to the anoctamin family.

The protein localises to the cell membrane. It catalyses the reaction a 1,2-diacyl-sn-glycero-3-phospho-L-serine(in) = a 1,2-diacyl-sn-glycero-3-phospho-L-serine(out). It carries out the reaction a beta-D-galactosyl-(1&lt;-&gt;1')-N-acylsphing-4-enine(out) = a beta-D-galactosyl-(1&lt;-&gt;1')-N-acylsphing-4-enine(in). The catalysed reaction is a 1,2-diacyl-sn-glycero-3-phosphocholine(in) = a 1,2-diacyl-sn-glycero-3-phosphocholine(out). Has calcium-dependent phospholipid scramblase activity; scrambles phosphatidylserine, phosphatidylcholine and galactosylceramide. Does not exhibit calcium-activated chloride channel (CaCC) activity. This chain is Anoctamin-4 (ANO4), found in Homo sapiens (Human).